The chain runs to 349 residues: Isopentenyl-diphosphate delta-isomerase (349 aa).

A substrate-binding site is contributed by Arg9–Lys10. Residues Ala65–Thr67, Ser95, and Asn124 each bind FMN. Ser95 to His97 contacts substrate. Gln154 is a substrate binding site. Glu155 serves as a coordination point for Mg(2+). Residues Lys186, Ser211, Thr216, Gly262–Arg264, and Ser283–Arg284 contribute to the FMN site.

The protein belongs to the IPP isomerase type 2 family. As to quaternary structure, homooctamer. Dimer of tetramers. It depends on FMN as a cofactor. Requires NADPH as cofactor. Mg(2+) is required as a cofactor.

It is found in the cytoplasm. It catalyses the reaction isopentenyl diphosphate = dimethylallyl diphosphate. Its function is as follows. Involved in the biosynthesis of isoprenoids. Catalyzes the 1,3-allylic rearrangement of the homoallylic substrate isopentenyl (IPP) to its allylic isomer, dimethylallyl diphosphate (DMAPP). The sequence is that of Isopentenyl-diphosphate delta-isomerase from Staphylococcus aureus (strain USA300 / TCH1516).